The following is a 471-amino-acid chain: (13S,14R)-1,13-dihydroxy-N-methylcanadine 13-O-acetyltransferase AT1 (471 aa).

Belongs to the plant acyltransferase family.

It carries out the reaction (13S,14R)-1,13-dihydroxy-N-methylcanadine + acetyl-CoA = (13S,14R)-13-O-acetyl-1-hydroxy-N-methylcanadine + CoA. The protein operates within alkaloid biosynthesis. Functionally, acetyltransferase involved in the biosynthesis of the benzylisoquinoline alkaloid noscapine. Converts (13S,14R)-1,13-dihydroxy-N-methylcanadine to (13S,14R)-13-O-acetyl-1-hydroxy-N-methylcanadine. This Papaver somniferum (Opium poppy) protein is (13S,14R)-1,13-dihydroxy-N-methylcanadine 13-O-acetyltransferase AT1.